The following is a 190-amino-acid chain: Protein GrpE (190 aa).

Positions 1–18 (MTETPNTSSEEIQTSEPS) are enriched in polar residues. Positions 1-21 (MTETPNTSSEEIQTSEPSPDN) are disordered.

The protein belongs to the GrpE family. As to quaternary structure, homodimer.

The protein localises to the cytoplasm. In terms of biological role, participates actively in the response to hyperosmotic and heat shock by preventing the aggregation of stress-denatured proteins, in association with DnaK and GrpE. It is the nucleotide exchange factor for DnaK and may function as a thermosensor. Unfolded proteins bind initially to DnaJ; upon interaction with the DnaJ-bound protein, DnaK hydrolyzes its bound ATP, resulting in the formation of a stable complex. GrpE releases ADP from DnaK; ATP binding to DnaK triggers the release of the substrate protein, thus completing the reaction cycle. Several rounds of ATP-dependent interactions between DnaJ, DnaK and GrpE are required for fully efficient folding. The sequence is that of Protein GrpE from Chlamydia trachomatis serovar L2b (strain UCH-1/proctitis).